The following is a 553-amino-acid chain: Probable malate:quinone oxidoreductase (553 aa).

Positions 524 to 553 are disordered; it reads PPPKIDVNTPSQATGTAPARPAKASADMAL.

This sequence belongs to the MQO family. Requires FAD as cofactor.

It catalyses the reaction (S)-malate + a quinone = a quinol + oxaloacetate. It participates in carbohydrate metabolism; tricarboxylic acid cycle; oxaloacetate from (S)-malate (quinone route): step 1/1. The chain is Probable malate:quinone oxidoreductase from Burkholderia lata (strain ATCC 17760 / DSM 23089 / LMG 22485 / NCIMB 9086 / R18194 / 383).